Consider the following 508-residue polypeptide: MDEKTKKAEEMALSLARAVAGGDEQAAIKYATWLAEQRVPLRVQVKPEVSPTQDIRLCVSVEDAYMHTVTIWLTVRPDMTVASLKDMVFLDYGFPPSLQQWVVGQRLARDQETLHSHGIRRNGDGAYLYLLSARNTSLNPQELQRQRQLRMLEDLGFKDLTLQSRGPLEPVLPKPRTNQEPGQPDAAPESPPVGWQCPGCTFINKPTRPGCEMCCRARPETYQIPASYQPDEEERARLAGEEEALRQYQQRKQQQQEGNYLQHVQLEQRSLVLNTEPTECPVCYSVLAPGEAVVLRECLHTFCRECLQGTIRNSQEAEVACPFIDSTYSCPGKLLEREIRALLSPEDYQRFLDLGVSIAENRSTLSYHCKTPDCRGWCFFEDDVNEFTCPVCTRVNCLLCKAIHEHMNCREYQDDLALRAQNDVAARQTTEMLKVMLQQGEAMHCPQCRIVVQKKDGCDWIRCTVCHTEICWVTKGPRWGPGGPGDTSGGCRCRVNGIPCHPSCQNCH.

Met-1 bears the N-acetylmethionine mark. The interval 1-218 (MDEKTKKAEE…PGCEMCCRAR (218 aa)) is interaction with IRF3. The segment at 1–268 (MDEKTKKAEE…NYLQHVQLEQ (268 aa)) is interaction with TAB2. Ser-50 is subject to Phosphoserine. In terms of domain architecture, Ubiquitin-like spans 55-119 (IRLCVSVEDA…DQETLHSHGI (65 aa)). The tract at residues 69–131 (VTIWLTVRPD…NGDGAYLYLL (63 aa)) is interaction with RNF31. The interval 163–191 (QSRGPLEPVLPKPRTNQEPGQPDAAPESP) is disordered. The RanBP2-type zinc finger occupies 188–220 (PESPPVGWQCPGCTFINKPTRPGCEMCCRARPE). Residues 231–259 (DEEERARLAGEEEALRQYQQRKQQQQEGN) adopt a coiled-coil conformation. Residues 276 to 504 (EPTECPVCYS…VNGIPCHPSC (229 aa)) form a TRIAD supradomain region. Residues Cys-280, Cys-283, Cys-298, His-300, Cys-303, Cys-306, and Cys-321 each coordinate Zn(2+). The RING-type 1 zinc-finger motif lies at 280-330 (CPVCYSVLAPGEAVVLRECLHTFCRECLQGTIRNSQEAEVACPFIDSTYSC). Position 328 is a phosphotyrosine (Tyr-328). Residues Cys-330, Cys-369, Cys-374, Cys-389, Cys-392, Cys-397, Cys-400, His-404, Cys-409, Cys-445, and Cys-448 each coordinate Zn(2+). Residues 349–409 (QRFLDLGVSI…CKAIHEHMNC (61 aa)) form an IBR-type zinc finger. The RING-type 2; atypical zinc-finger motif lies at 445–474 (CPQCRIVVQKKDGCDWIRCTVCHTEICWVT). The active site involves Cys-458. Zn(2+) contacts are provided by Cys-463 and Cys-466.

It belongs to the RBR family. As to quaternary structure, component of the LUBAC complex (linear ubiquitin chain assembly complex) which consists of SHARPIN, RBCK1 and RNF31. LUBAC has a MW of approximately 600 kDa suggesting a heteromultimeric assembly of its subunits. Interacts with beta-I-type (PRKCB1) and zeta-type protein kinase C (PRKCZ). Interacts with UBE2L3. Interacts with IREB2 only in iron-rich conditions. Associates with the TNF-R1 signaling complex (TNF-RSC) in a stimulation-dependent manner. Interacts with EYA1, TAB2, TAB3, MAP3K7 TRAF6 and RIPK1. Interacts with IRF3. Post-translationally, auto-ubiquitinated. Auto-ubiquitination leads to degradation by the proteasome. In terms of processing, phosphorylated. In vitro, phosphorylation inhibits auto-ubiquitination activity.

It catalyses the reaction [E2 ubiquitin-conjugating enzyme]-S-ubiquitinyl-L-cysteine + [acceptor protein]-L-lysine = [E2 ubiquitin-conjugating enzyme]-L-cysteine + [acceptor protein]-N(6)-ubiquitinyl-L-lysine.. It participates in protein modification; protein ubiquitination. Its function is as follows. E3 ubiquitin-protein ligase, which accepts ubiquitin from specific E2 ubiquitin-conjugating enzymes, such as UBE2L3/UBCM4, and then transfers it to substrates. Functions as an E3 ligase for oxidized IREB2 and both heme and oxygen are necessary for IREB2 ubiquitination. Promotes ubiquitination of TAB2 and IRF3 and their degradation by the proteasome. Component of the LUBAC complex which conjugates linear ('Met-1'-linked) polyubiquitin chains to substrates and plays a key role in NF-kappa-B activation and regulation of inflammation. LUBAC conjugates linear polyubiquitin to IKBKG and RIPK1 and is involved in activation of the canonical NF-kappa-B and the JNK signaling pathways. Linear ubiquitination mediated by the LUBAC complex interferes with TNF-induced cell death and thereby prevents inflammation. LUBAC is recruited to the TNF-R1 signaling complex (TNF-RSC) following polyubiquitination of TNF-RSC components by BIRC2 and/or BIRC3 and to conjugate linear polyubiquitin to IKBKG and possibly other components contributing to the stability of the complex. The LUBAC complex is also involved in innate immunity by conjugating linear polyubiquitin chains at the surface of bacteria invading the cytosol to form the ubiquitin coat surrounding bacteria. LUBAC is not able to initiate formation of the bacterial ubiquitin coat, and can only promote formation of linear polyubiquitins on pre-existing ubiquitin. The bacterial ubiquitin coat acts as an 'eat-me' signal for xenophagy and promotes NF-kappa-B activation. Together with OTULIN, the LUBAC complex regulates the canonical Wnt signaling during angiogenesis. Binds polyubiquitin of different linkage types. In Mus musculus (Mouse), this protein is RanBP-type and C3HC4-type zinc finger-containing protein 1 (Rbck1).